An 857-amino-acid polypeptide reads, in one-letter code: Protein sip-5 (857 aa).

6 disordered regions span residues 1 to 81 (MGNA…ARRL), 157 to 231 (GLPI…FKPT), 384 to 416 (SESS…APNV), 466 to 517 (FGRR…GNRR), 545 to 747 (KAEK…PMFN), and 763 to 857 (HAGK…QVTL). Basic and acidic residues-rich tracts occupy residues 7 to 16 (KESRGDDSGR) and 36 to 48 (ESSR…RHDL). The span at 49–61 (TGLLGRAAGGSSS) shows a compositional bias: low complexity. The segment covering 62–81 (HADERHERKETKQEREARRL) has biased composition (basic and acidic residues). Composition is skewed to polar residues over residues 179-191 (ASPT…TNHL) and 199-208 (SLSTASEHST). Low complexity-rich tracts occupy residues 209–230 (SNAG…PFKP), 384–394 (SESSVNSGSLS), and 476–504 (SASA…TANT). Residues 545–572 (KAEKEEQKEAKKREKEREKAEKKAEKAA) are compositionally biased toward basic and acidic residues. Low complexity-rich tracts occupy residues 586 to 604 (SRSG…PGLS) and 621 to 645 (ASVA…ALAP). Basic and acidic residues predominate over residues 648–657 (STKDKGKAVD). The segment covering 688 to 697 (SSASSASSSA) has biased composition (low complexity). The span at 698–712 (VESNQGSYVPPSNLQ) shows a compositional bias: polar residues. The segment covering 783–799 (ETAKSGEGAGEHVEHVL) has biased composition (basic and acidic residues). Composition is skewed to polar residues over residues 800-838 (DSQT…STAS) and 845-857 (NETT…QVTL).

The protein belongs to the SIP5 family.

Its subcellular location is the cytoplasm. May negatively regulate the snf-1 kinase. This is Protein sip-5 (sip-5) from Neurospora crassa (strain ATCC 24698 / 74-OR23-1A / CBS 708.71 / DSM 1257 / FGSC 987).